The following is a 233-amino-acid chain: uncharacterized protein (233 aa).

The helical transmembrane segment at leucine 21–isoleucine 41 threads the bilayer. The tract at residues proline 44–serine 163 is disordered. Composition is skewed to basic and acidic residues over residues aspartate 48 to glutamine 57, lysine 66 to aspartate 108, and aspartate 135 to aspartate 144.

The protein resides in the cell membrane. This is an uncharacterized protein from Bacillus subtilis (strain 168).